The sequence spans 1360 residues: DNA-directed RNA polymerase subunit beta (1360 aa).

This sequence belongs to the RNA polymerase beta chain family. The RNAP catalytic core consists of 2 alpha, 1 beta, 1 beta' and 1 omega subunit. When a sigma factor is associated with the core the holoenzyme is formed, which can initiate transcription.

It carries out the reaction RNA(n) + a ribonucleoside 5'-triphosphate = RNA(n+1) + diphosphate. In terms of biological role, DNA-dependent RNA polymerase catalyzes the transcription of DNA into RNA using the four ribonucleoside triphosphates as substrates. The polypeptide is DNA-directed RNA polymerase subunit beta (Vesicomyosocius okutanii subsp. Calyptogena okutanii (strain HA)).